A 161-amino-acid chain; its full sequence is Ragulator complex protein LAMTOR1 (161 aa).

The disordered stretch occupies residues 1-43 (MGCCYSSENEDSDQDREERKLLLDPSSTPTKALNGAEPNYHSL). Glycine 2 carries the N-myristoyl glycine lipid modification. Residues cysteine 3 and cysteine 4 are each lipidated (S-palmitoyl cysteine). Residue lysine 20 forms a Glycyl lysine isopeptide (Lys-Gly) (interchain with G-Cter in ubiquitin) linkage. Position 27 is a phosphoserine (serine 27). Position 28 is a phosphothreonine (threonine 28). Residue lysine 31 forms a Glycyl lysine isopeptide (Lys-Gly) (interchain with G-Cter in ubiquitin) linkage. Phosphoserine is present on residues serine 42 and serine 56. A Glycyl lysine isopeptide (Lys-Gly) (interchain with G-Cter in ubiquitin) cross-link involves residue lysine 60. The residue at position 98 (serine 98) is a Phosphoserine. Glycyl lysine isopeptide (Lys-Gly) (interchain with G-Cter in ubiquitin) cross-links involve residues lysine 103 and lysine 104. The segment at 121–161 (SEPIPFSDLQQVSRIAAYAYSALSQIRVDAKEELVVQFGIP) is interaction with LAMTOR2 and LAMTOR3. Residue serine 141 is modified to Phosphoserine.

This sequence belongs to the LAMTOR1 family. As to quaternary structure, part of the Ragulator complex composed of LAMTOR1, LAMTOR2, LAMTOR3, LAMTOR4 and LAMTOR5. LAMTOR4 and LAMTOR5 form a heterodimer that interacts, through LAMTOR1, with a LAMTOR2, LAMTOR3 heterodimer. Interacts with LAMTOR2 and LAMTOR3; the interaction is direct. The Ragulator complex interacts with both the mTORC1 complex and heterodimers constituted of the Rag GTPases RagA/RRAGA, RagB/RRAGB, RagC/RRAGC and RagD/RRAGD; regulated by amino acid availability. The Ragulator complex interacts with SLC38A9; the probable amino acid sensor. Component of the lysosomal folliculin complex (LFC), composed of FLCN, FNIP1 (or FNIP2), RagA/RRAGA or RagB/RRAGB GDP-bound, RagC/RRAGC or RagD/RRAGD GTP-bound, and Ragulator. Associates with the lysosomal V-ATPase complex; interaction promotes the guanine nucleotide exchange factor (GEF) of the Ragulator complex. Interacts with MMP14. Interacts with CDKN1B; prevents the interaction of CDKN1B with RHOA leaving RHOA in a form accessible to activation by ARHGEF2. Interacts with PIP4P1. N-terminal myristoylation and palmitoylation mediates its recruitment to lysosome membranes, thereby promoting localization of the Ragulator complex to lysosomes. N-myristoylation by NMT1 is required for palmitoylation at Cys-3 and Cys-4. In terms of processing, ubiquitinated at Lys-60, Lys-103 and Lys-104 by UBE3A in neurons, promoting its degradation by the proteasome, thereby limiting mTORC1 signaling and activity-dependent synaptic remodeling. Ubiquitination at Lys-20 impairs the association with the lysosomal V-ATPase complex. Deubiquitination at Lys-20 by USP32 promotes the association with the lysosomal V-ATPase complex and subsequent activation of the mTORC1 complex.

The protein localises to the lysosome membrane. It localises to the late endosome membrane. Its function is as follows. Key component of the Ragulator complex, a multiprotein complex involved in amino acid sensing and activation of mTORC1, a signaling complex promoting cell growth in response to growth factors, energy levels, and amino acids. Activated by amino acids through a mechanism involving the lysosomal V-ATPase, the Ragulator plays a dual role for the small GTPases Rag (RagA/RRAGA, RagB/RRAGB, RagC/RRAGC and/or RagD/RRAGD): it (1) acts as a guanine nucleotide exchange factor (GEF), activating the small GTPases Rag and (2) mediates recruitment of Rag GTPases to the lysosome membrane. Activated Ragulator and Rag GTPases function as a scaffold recruiting mTORC1 to lysosomes where it is in turn activated. LAMTOR1 is directly responsible for anchoring the Ragulator complex to the lysosomal membrane. LAMTOR1 wraps around the other subunits of the Ragulator complex to hold them in place and interacts with the Rag GTPases, thereby playing a key role in the recruitment of the mTORC1 complex to lysosomes. Also involved in the control of embryonic stem cells differentiation via non-canonical RagC/RRAGC and RagD/RRAGD activation: together with FLCN, it is necessary to recruit and activate RagC/RRAGC and RagD/RRAGD at the lysosomes, and to induce exit of embryonic stem cells from pluripotency via non-canonical, mTOR-independent TFE3 inactivation. Also required for late endosomes/lysosomes biogenesis it may regulate both the recycling of receptors through endosomes and the MAPK signaling pathway through recruitment of some of its components to late endosomes. May be involved in cholesterol homeostasis regulating LDL uptake and cholesterol release from late endosomes/lysosomes. May also play a role in RHOA activation. The sequence is that of Ragulator complex protein LAMTOR1 from Mus musculus (Mouse).